The chain runs to 546 residues: Aladin (546 aa).

N-acetylcysteine is present on Cys-2. Ser-33 is modified (phosphoserine). 7 WD repeats span residues 142–180, 183–222, 234–274, 280–316, 324–380, 386–433, and 442–482; these read EFAQ…VYNA, TIVP…IWTL, GCAQ…VWDV, VPLP…VWEA, WPTL…IVAD, IQTP…LFRT, and LPCG…IAHI. Phosphoserine is present on residues Ser-495, Ser-511, Ser-522, and Ser-525. Residues 500 to 546 are disordered; it reads RAQEPPAGGGGSIHDLPLFTETSPTSAPWDPLPGPPPVLPHSPHSHL. The span at 529 to 539 shows a compositional bias: pro residues; that stretch reads DPLPGPPPVLP. At Ser-541 the chain carries Phosphoserine. The Microbody targeting signal motif lies at 544 to 546; it reads SHL.

In terms of assembly, interacts with NDC1, the interaction is required for nuclear pore localization. Interacts with the inactive form aurora kinase AURKA. Interacts with PGRMC2. As to expression, widely expressed. Particularly abundant in cerebellum, corpus callosum, adrenal gland, pituitary gland, gastrointestinal structures and fetal lung.

Its subcellular location is the nucleus. The protein localises to the nuclear pore complex. The protein resides in the cytoplasm. It localises to the cytoskeleton. It is found in the spindle pole. Its subcellular location is the nucleus envelope. Functionally, plays a role in the normal development of the peripheral and central nervous system. Required for the correct localization of aurora kinase AURKA and the microtubule minus end-binding protein NUMA1 as well as a subset of AURKA targets which ensures proper spindle formation and timely chromosome alignment. This is Aladin (AAAS) from Homo sapiens (Human).